Reading from the N-terminus, the 327-residue chain is Probable cell division protein WhiA (327 aa).

A DNA-binding region (H-T-H motif) is located at residues 275–308 (SLEELGRLADPPMTKDAVAGRIRRLLSMADRKAK).

The protein belongs to the WhiA family.

Involved in cell division and chromosome segregation. In Mycobacterium marinum (strain ATCC BAA-535 / M), this protein is Probable cell division protein WhiA.